The primary structure comprises 417 residues: NADH-quinone oxidoreductase subunit D (417 aa).

The protein belongs to the complex I 49 kDa subunit family. NDH-1 is composed of 14 different subunits. Subunits NuoB, C, D, E, F, and G constitute the peripheral sector of the complex.

The protein resides in the cell inner membrane. It carries out the reaction a quinone + NADH + 5 H(+)(in) = a quinol + NAD(+) + 4 H(+)(out). Functionally, NDH-1 shuttles electrons from NADH, via FMN and iron-sulfur (Fe-S) centers, to quinones in the respiratory chain. The immediate electron acceptor for the enzyme in this species is believed to be ubiquinone. Couples the redox reaction to proton translocation (for every two electrons transferred, four hydrogen ions are translocated across the cytoplasmic membrane), and thus conserves the redox energy in a proton gradient. The polypeptide is NADH-quinone oxidoreductase subunit D (Burkholderia cenocepacia (strain HI2424)).